We begin with the raw amino-acid sequence, 316 residues long: Methionyl-tRNA formyltransferase (316 aa).

Position 112 to 115 (112 to 115 (SLLP)) interacts with (6S)-5,6,7,8-tetrahydrofolate.

It belongs to the Fmt family.

The enzyme catalyses L-methionyl-tRNA(fMet) + (6R)-10-formyltetrahydrofolate = N-formyl-L-methionyl-tRNA(fMet) + (6S)-5,6,7,8-tetrahydrofolate + H(+). Functionally, attaches a formyl group to the free amino group of methionyl-tRNA(fMet). The formyl group appears to play a dual role in the initiator identity of N-formylmethionyl-tRNA by promoting its recognition by IF2 and preventing the misappropriation of this tRNA by the elongation apparatus. This chain is Methionyl-tRNA formyltransferase, found in Actinobacillus pleuropneumoniae serotype 5b (strain L20).